Reading from the N-terminus, the 318-residue chain is tRNA uridine(34) hydroxylase (318 aa).

In terms of domain architecture, Rhodanese spans 125 to 219; the sequence is QDPNTVVIDA…YGTSKDTEGK (95 aa). C179 (cysteine persulfide intermediate) is an active-site residue.

This sequence belongs to the TrhO family.

It carries out the reaction uridine(34) in tRNA + AH2 + O2 = 5-hydroxyuridine(34) in tRNA + A + H2O. Catalyzes oxygen-dependent 5-hydroxyuridine (ho5U) modification at position 34 in tRNAs. This is tRNA uridine(34) hydroxylase from Acholeplasma laidlawii (strain PG-8A).